A 440-amino-acid chain; its full sequence is Sorting nexin-31 (440 aa).

The PX domain maps to 1–109; it reads MKMHFCIPVS…EFLKLAQLNT (109 aa).

This sequence belongs to the sorting nexin family. Interacts with CCDC22, CCDC93, VPS26C and VPS35L, associates with the retriever and CCC complexes.

Its function is as follows. May be involved in protein trafficking. This chain is Sorting nexin-31 (SNX31), found in Homo sapiens (Human).